Here is an 839-residue protein sequence, read N- to C-terminus: uncharacterized protein (839 aa).

Disordered regions lie at residues 504–611, 627–646, and 682–839; these read TVSP…NVVN, KNNN…DNHC, and NHNY…SLGS. The segment covering 509-611 has biased composition (low complexity); that stretch reads GNNNVTGDVD…EGSNNCNVVN (103 aa). Basic and acidic residues predominate over residues 636-646; sequence NEYKNSNDNHC. 2 stretches are compositionally biased toward low complexity: residues 689–704 and 713–753; these read NGNN…NNNN and QQQP…NNNK. The stretch at 726-764 forms a coiled coil; sequence QQSQQQPQLQQKKQQIQEEQQNLNNNNKSIEDDEEAFNS. Over residues 765 to 776 the composition is skewed to basic and acidic residues; it reads DDEHDHEDDSIR. The segment covering 809–823 has biased composition (acidic residues); the sequence is EDNDDDSDISDSDSD.

This is an uncharacterized protein from Dictyostelium discoideum (Social amoeba).